The following is a 548-amino-acid chain: Membrane protein insertase YidC (548 aa).

The helical transmembrane segment at 6 to 26 (NLLVIALLFVSFMIWQAWEQD) threads the bilayer. The segment at 28–56 (NPQPQTQQTTQTTTTAAGSAADQGVPASG) is disordered. The segment covering 29-42 (PQPQTQQTTQTTTT) has biased composition (low complexity). 4 helical membrane passes run 350–370 (FVGN…GIMY), 424–444 (FPLI…MGSI), 458–478 (LSAQ…MFFI), and 499–519 (PVIF…YYIV).

The protein belongs to the OXA1/ALB3/YidC family. Type 1 subfamily. Interacts with the Sec translocase complex via SecD. Specifically interacts with transmembrane segments of nascent integral membrane proteins during membrane integration.

The protein resides in the cell inner membrane. In terms of biological role, required for the insertion and/or proper folding and/or complex formation of integral membrane proteins into the membrane. Involved in integration of membrane proteins that insert both dependently and independently of the Sec translocase complex, as well as at least some lipoproteins. Aids folding of multispanning membrane proteins. The polypeptide is Membrane protein insertase YidC (Salmonella agona (strain SL483)).